The primary structure comprises 237 residues: Carbohydrate deacetylase (237 aa).

2 residues coordinate Mg(2+): histidine 59 and histidine 125.

This sequence belongs to the YdjC deacetylase family. It depends on Mg(2+) as a cofactor.

Probably catalyzes the deacetylation of acetylated carbohydrates an important step in the degradation of oligosaccharides. In Halalkalibacterium halodurans (strain ATCC BAA-125 / DSM 18197 / FERM 7344 / JCM 9153 / C-125) (Bacillus halodurans), this protein is Carbohydrate deacetylase.